The chain runs to 484 residues: Protein nucleotidyltransferase YdiU (484 aa).

Residues G92, G94, R95, K115, D127, G128, R178, and R185 each coordinate ATP. D258 (proton acceptor) is an active-site residue. Residues N259 and D268 each contribute to the Mg(2+) site. ATP is bound at residue D268.

Belongs to the SELO family. Requires Mg(2+) as cofactor. The cofactor is Mn(2+).

It catalyses the reaction L-seryl-[protein] + ATP = 3-O-(5'-adenylyl)-L-seryl-[protein] + diphosphate. The catalysed reaction is L-threonyl-[protein] + ATP = 3-O-(5'-adenylyl)-L-threonyl-[protein] + diphosphate. The enzyme catalyses L-tyrosyl-[protein] + ATP = O-(5'-adenylyl)-L-tyrosyl-[protein] + diphosphate. It carries out the reaction L-histidyl-[protein] + UTP = N(tele)-(5'-uridylyl)-L-histidyl-[protein] + diphosphate. It catalyses the reaction L-seryl-[protein] + UTP = O-(5'-uridylyl)-L-seryl-[protein] + diphosphate. The catalysed reaction is L-tyrosyl-[protein] + UTP = O-(5'-uridylyl)-L-tyrosyl-[protein] + diphosphate. Its function is as follows. Nucleotidyltransferase involved in the post-translational modification of proteins. It can catalyze the addition of adenosine monophosphate (AMP) or uridine monophosphate (UMP) to a protein, resulting in modifications known as AMPylation and UMPylation. This is Protein nucleotidyltransferase YdiU from Mycolicibacterium smegmatis (strain ATCC 700084 / mc(2)155) (Mycobacterium smegmatis).